The chain runs to 242 residues: Protein unc-119 homolog B-A (242 aa).

The span at 1-20 shows a compositional bias: basic and acidic residues; the sequence is MSGSKREAALTGQPKDERKK. The segment at 1 to 49 is disordered; the sequence is MSGSKREAALTGQPKDERKKSGGGVINRLKARRVQGKESGTSDQSSVTP. Residues 38 to 48 are compositionally biased toward polar residues; that stretch reads ESGTSDQSSVT. Position 133 (tyrosine 133) interacts with tetradecanoate.

Belongs to the PDE6D/unc-119 family.

In terms of biological role, myristoyl-binding protein that acts as a cargo adapter: specifically binds the myristoyl moiety of a subset of N-terminally myristoylated proteins and is required for their localization. Plays a key role in localization of proteins to the primary cilium membrane. This is Protein unc-119 homolog B-A (unc119b-a) from Xenopus laevis (African clawed frog).